Here is a 257-residue protein sequence, read N- to C-terminus: Phycoerythrobilin:ferredoxin oxidoreductase (257 aa).

Belongs to the HY2 family.

The enzyme catalyses (3Z)-phycoerythrobilin + oxidized 2[4Fe-4S]-[ferredoxin] = 15,16-dihydrobiliverdin + reduced 2[4Fe-4S]-[ferredoxin] + 2 H(+). Functionally, catalyzes the two-electron reduction of the C2 and C3(1) diene system of 15,16-dihydrobiliverdin. In Synechococcus sp. (strain CC9311), this protein is Phycoerythrobilin:ferredoxin oxidoreductase.